Here is a 350-residue protein sequence, read N- to C-terminus: Nicotinate-nucleotide--dimethylbenzimidazole phosphoribosyltransferase (350 aa).

Glu316 acts as the Proton acceptor in catalysis.

Belongs to the CobT family.

The catalysed reaction is 5,6-dimethylbenzimidazole + nicotinate beta-D-ribonucleotide = alpha-ribazole 5'-phosphate + nicotinate + H(+). The protein operates within nucleoside biosynthesis; alpha-ribazole biosynthesis; alpha-ribazole from 5,6-dimethylbenzimidazole: step 1/2. Its function is as follows. Catalyzes the synthesis of alpha-ribazole-5'-phosphate from nicotinate mononucleotide (NAMN) and 5,6-dimethylbenzimidazole (DMB). The chain is Nicotinate-nucleotide--dimethylbenzimidazole phosphoribosyltransferase from Pseudomonas syringae pv. syringae (strain B728a).